Here is a 221-residue protein sequence, read N- to C-terminus: Large ribosomal subunit protein uL4 (221 aa).

Positions 46–74 (AGTASTKTRSEVSGGGRKPWPQKHTGRAR) are disordered.

It belongs to the universal ribosomal protein uL4 family. In terms of assembly, part of the 50S ribosomal subunit.

One of the primary rRNA binding proteins, this protein initially binds near the 5'-end of the 23S rRNA. It is important during the early stages of 50S assembly. It makes multiple contacts with different domains of the 23S rRNA in the assembled 50S subunit and ribosome. In terms of biological role, forms part of the polypeptide exit tunnel. This chain is Large ribosomal subunit protein uL4, found in Petrotoga mobilis (strain DSM 10674 / SJ95).